A 204-amino-acid chain; its full sequence is Large ribosomal subunit protein uL4 (204 aa).

The tract at residues 49–76 (KTKGISDVSGTTAKPYGQKRTGRARQGS) is disordered.

The protein belongs to the universal ribosomal protein uL4 family. Part of the 50S ribosomal subunit.

Functionally, one of the primary rRNA binding proteins, this protein initially binds near the 5'-end of the 23S rRNA. It is important during the early stages of 50S assembly. It makes multiple contacts with different domains of the 23S rRNA in the assembled 50S subunit and ribosome. In terms of biological role, forms part of the polypeptide exit tunnel. This is Large ribosomal subunit protein uL4 from Wolbachia pipientis wMel.